Reading from the N-terminus, the 350-residue chain is 8-amino-7-oxononanoate synthase (350 aa).

77–78 (GY) contributes to the pyridoxal 5'-phosphate binding site. His102 lines the substrate pocket. Residues Ser150, 175-178 (DDAH), and 204-207 (TLSK) each bind pyridoxal 5'-phosphate. N6-(pyridoxal phosphate)lysine is present on Lys207. Residue Thr316 participates in substrate binding.

Belongs to the class-II pyridoxal-phosphate-dependent aminotransferase family. BioF subfamily. Homodimer. Pyridoxal 5'-phosphate is required as a cofactor.

The catalysed reaction is 6-carboxyhexanoyl-[ACP] + L-alanine + H(+) = (8S)-8-amino-7-oxononanoate + holo-[ACP] + CO2. Its pathway is cofactor biosynthesis; biotin biosynthesis. Its function is as follows. Catalyzes the decarboxylative condensation of pimeloyl-[acyl-carrier protein] and L-alanine to produce 8-amino-7-oxononanoate (AON), [acyl-carrier protein], and carbon dioxide. The sequence is that of 8-amino-7-oxononanoate synthase from Methylocella silvestris (strain DSM 15510 / CIP 108128 / LMG 27833 / NCIMB 13906 / BL2).